Consider the following 278-residue polypeptide: Shikimate dehydrogenase (NADP(+)) (278 aa).

Residues 19 to 21 (SRS) and threonine 66 each bind shikimate. Lysine 70 (proton acceptor) is an active-site residue. Positions 91 and 106 each coordinate shikimate. Residues 129–133 (GAGGA) and phenylalanine 221 contribute to the NADP(+) site. Tyrosine 223 contacts shikimate. Glycine 242 contacts NADP(+).

This sequence belongs to the shikimate dehydrogenase family. As to quaternary structure, homodimer.

It catalyses the reaction shikimate + NADP(+) = 3-dehydroshikimate + NADPH + H(+). It participates in metabolic intermediate biosynthesis; chorismate biosynthesis; chorismate from D-erythrose 4-phosphate and phosphoenolpyruvate: step 4/7. In terms of biological role, involved in the biosynthesis of the chorismate, which leads to the biosynthesis of aromatic amino acids. Catalyzes the reversible NADPH linked reduction of 3-dehydroshikimate (DHSA) to yield shikimate (SA). This is Shikimate dehydrogenase (NADP(+)) from Anaeromyxobacter dehalogenans (strain 2CP-1 / ATCC BAA-258).